Consider the following 251-residue polypeptide: E3 ubiquitin-protein ligase Os06g0535400 (251 aa).

3 consecutive transmembrane segments (helical) span residues 28 to 48 (VVAA…YCFA), 102 to 122 (LANR…IVVF), and 127 to 147 (ADVV…VWLS). The RING-type; atypical zinc-finger motif lies at 185 to 227 (CCVCLAGMREAQALRDLPRCGHRFHAKCIGKWLTAHPTCPVCR).

The protein resides in the membrane. It carries out the reaction S-ubiquitinyl-[E2 ubiquitin-conjugating enzyme]-L-cysteine + [acceptor protein]-L-lysine = [E2 ubiquitin-conjugating enzyme]-L-cysteine + N(6)-ubiquitinyl-[acceptor protein]-L-lysine.. It functions in the pathway protein modification; protein ubiquitination. Functionally, possesses E3 ubiquitin-protein ligase in vitro. This is E3 ubiquitin-protein ligase Os06g0535400 from Oryza sativa subsp. japonica (Rice).